Reading from the N-terminus, the 183-residue chain is Crossover junction endodeoxyribonuclease RuvC (183 aa).

Residues Asp7, Glu66, and Asp138 contribute to the active site. Residues Asp7, Glu66, and Asp138 each contribute to the Mg(2+) site.

This sequence belongs to the RuvC family. As to quaternary structure, homodimer which binds Holliday junction (HJ) DNA. The HJ becomes 2-fold symmetrical on binding to RuvC with unstacked arms; it has a different conformation from HJ DNA in complex with RuvA. In the full resolvosome a probable DNA-RuvA(4)-RuvB(12)-RuvC(2) complex forms which resolves the HJ. The cofactor is Mg(2+).

The protein localises to the cytoplasm. It carries out the reaction Endonucleolytic cleavage at a junction such as a reciprocal single-stranded crossover between two homologous DNA duplexes (Holliday junction).. Its function is as follows. The RuvA-RuvB-RuvC complex processes Holliday junction (HJ) DNA during genetic recombination and DNA repair. Endonuclease that resolves HJ intermediates. Cleaves cruciform DNA by making single-stranded nicks across the HJ at symmetrical positions within the homologous arms, yielding a 5'-phosphate and a 3'-hydroxyl group; requires a central core of homology in the junction. The consensus cleavage sequence is 5'-(A/T)TT(C/G)-3'. Cleavage occurs on the 3'-side of the TT dinucleotide at the point of strand exchange. HJ branch migration catalyzed by RuvA-RuvB allows RuvC to scan DNA until it finds its consensus sequence, where it cleaves and resolves the cruciform DNA. In Burkholderia ambifaria (strain ATCC BAA-244 / DSM 16087 / CCUG 44356 / LMG 19182 / AMMD) (Burkholderia cepacia (strain AMMD)), this protein is Crossover junction endodeoxyribonuclease RuvC.